The primary structure comprises 410 residues: Polyadenylation and cleavage factor homolog 5 (410 aa).

Residues 1-17 (MASNGSFSAQRNANAGT) are compositionally biased toward polar residues. The segment at 1 to 32 (MASNGSFSAQRNANAGTTMKRRNDNRGYGGGI) is disordered. Positions 191-214 (SKELTDLLSLLNNEKEKKTSEASN) form a coiled coil. A C2H2-type zinc finger spans residues 247–269 (RQCTSCGVRFKCQEEHSKHMDWH).

As to quaternary structure, forms a complex with cleavage and polyadenylation specificity factor (CPSF) subunits CSTF77, CLPS3, PCFS4 and PCFS1.

It localises to the nucleus. The protein is Polyadenylation and cleavage factor homolog 5 of Arabidopsis thaliana (Mouse-ear cress).